The primary structure comprises 185 residues: Ribosome-recycling factor (185 aa).

This sequence belongs to the RRF family.

It localises to the cytoplasm. Its function is as follows. Responsible for the release of ribosomes from messenger RNA at the termination of protein biosynthesis. May increase the efficiency of translation by recycling ribosomes from one round of translation to another. This Pseudomonas putida (strain W619) protein is Ribosome-recycling factor.